The chain runs to 470 residues: Aminodeoxychorismate synthase component 1 (470 aa).

This sequence belongs to the anthranilate synthase component I family. In terms of assembly, monomer. Heterodimer consisting of two non-identical subunits: a glutamine amidotransferase subunit (PabA) and a aminodeoxychorismate synthase subunit (PabB). Mg(2+) serves as cofactor.

It catalyses the reaction chorismate + L-glutamine = 4-amino-4-deoxychorismate + L-glutamate. The protein operates within cofactor biosynthesis; tetrahydrofolate biosynthesis; 4-aminobenzoate from chorismate: step 1/2. Part of a heterodimeric complex that catalyzes the two-step biosynthesis of 4-amino-4-deoxychorismate (ADC), a precursor of p-aminobenzoate (PABA) and tetrahydrofolate. In the first step, a glutamine amidotransferase (PabA) generates ammonia as a substrate that, along with chorismate, is used in the second step, catalyzed by aminodeoxychorismate synthase (PabB) to produce ADC. The protein is Aminodeoxychorismate synthase component 1 (pabB) of Bacillus subtilis (strain 168).